Reading from the N-terminus, the 118-residue chain is Ribonuclease P protein component (118 aa).

It belongs to the RnpA family. Consists of a catalytic RNA component (M1 or rnpB) and a protein subunit.

The catalysed reaction is Endonucleolytic cleavage of RNA, removing 5'-extranucleotides from tRNA precursor.. RNaseP catalyzes the removal of the 5'-leader sequence from pre-tRNA to produce the mature 5'-terminus. It can also cleave other RNA substrates such as 4.5S RNA. The protein component plays an auxiliary but essential role in vivo by binding to the 5'-leader sequence and broadening the substrate specificity of the ribozyme. This Rickettsia felis (strain ATCC VR-1525 / URRWXCal2) (Rickettsia azadi) protein is Ribonuclease P protein component.